The chain runs to 179 residues: UPF0302 protein BPUM_1989 (179 aa).

This sequence belongs to the UPF0302 family.

The protein is UPF0302 protein BPUM_1989 of Bacillus pumilus (strain SAFR-032).